Here is a 265-residue protein sequence, read N- to C-terminus: Undecaprenyl-diphosphatase (265 aa).

The next 7 membrane-spanning stretches (helical) occupy residues 38 to 58 (SDMF…IIYW), 80 to 100 (LIVA…LGFE), 107 to 127 (PIAW…WAAA), 135 to 155 (ITWL…VFPG), 178 to 198 (TEFA…YELL), 216 to 236 (IAFV…LAYI), and 244 to 264 (FAIY…TGLI).

It belongs to the UppP family.

Its subcellular location is the cell inner membrane. The catalysed reaction is di-trans,octa-cis-undecaprenyl diphosphate + H2O = di-trans,octa-cis-undecaprenyl phosphate + phosphate + H(+). Functionally, catalyzes the dephosphorylation of undecaprenyl diphosphate (UPP). Confers resistance to bacitracin. This chain is Undecaprenyl-diphosphatase, found in Rhizobium johnstonii (strain DSM 114642 / LMG 32736 / 3841) (Rhizobium leguminosarum bv. viciae).